A 100-amino-acid polypeptide reads, in one-letter code: Urease subunit gamma (100 aa).

Belongs to the urease gamma subunit family. In terms of assembly, heterotrimer of UreA (gamma), UreB (beta) and UreC (alpha) subunits. Three heterotrimers associate to form the active enzyme.

Its subcellular location is the cytoplasm. The catalysed reaction is urea + 2 H2O + H(+) = hydrogencarbonate + 2 NH4(+). The protein operates within nitrogen metabolism; urea degradation; CO(2) and NH(3) from urea (urease route): step 1/1. The polypeptide is Urease subunit gamma (Granulibacter bethesdensis (strain ATCC BAA-1260 / CGDNIH1)).